The following is a 147-amino-acid chain: Ubiquitin-conjugating enzyme E2-16 kDa (147 aa).

In terms of domain architecture, UBC core spans 1–147 (MALKRINKEL…AREWTRKYAI (147 aa)). Cys-107 acts as the Glycyl thioester intermediate in catalysis.

This sequence belongs to the ubiquitin-conjugating enzyme family.

The enzyme catalyses S-ubiquitinyl-[E1 ubiquitin-activating enzyme]-L-cysteine + [E2 ubiquitin-conjugating enzyme]-L-cysteine = [E1 ubiquitin-activating enzyme]-L-cysteine + S-ubiquitinyl-[E2 ubiquitin-conjugating enzyme]-L-cysteine.. The protein operates within protein modification; protein ubiquitination. In terms of biological role, catalyzes the covalent attachment of ubiquitin to other proteins. The polypeptide is Ubiquitin-conjugating enzyme E2-16 kDa (UBC1) (Pyricularia oryzae (strain 70-15 / ATCC MYA-4617 / FGSC 8958) (Rice blast fungus)).